Consider the following 202-residue polypeptide: Casparian strip membrane protein 1 (202 aa).

At 1-42 (MEKNKSTAIEIAESSKESKGKAPLLAAAVGHDRAAGYKRGVS) the chain is on the cytoplasmic side. A helical membrane pass occupies residues 43–63 (IFDLFLRISAATAALAATIVM). The Extracellular segment spans residues 64-90 (GTTEQTLPFFTQFFQFRAQYDDLPTFT). A helical transmembrane segment spans residues 91-111 (FFVVGMAIVTGYLILSVPFSI). Over 112–130 (VCIARPVAIGPRFLLIVGD) the chain is Cytoplasmic. A helical membrane pass occupies residues 131–151 (TLKAVLATSAAGSSAAIVYLA). At 152–173 (HNGNSDANWLDICQQFNDFCQR) the chain is on the extracellular side. Residues 174 to 194 (VSGAVVAAFVAVVLLIFLIVL) form a helical membrane-spanning segment. Residues 195–202 (SAMALRKN) are Cytoplasmic-facing.

It belongs to the Casparian strip membrane proteins (CASP) family. Homodimer and heterodimers.

It localises to the cell membrane. In terms of biological role, regulates membrane-cell wall junctions and localized cell wall deposition. Required for establishment of the Casparian strip membrane domain (CSD) and the subsequent formation of Casparian strips, a cell wall modification of the root endodermis that determines an apoplastic barrier between the intraorganismal apoplasm and the extraorganismal apoplasm and prevents lateral diffusion. The chain is Casparian strip membrane protein 1 from Striga hermonthica (Purple witchweed).